We begin with the raw amino-acid sequence, 292 residues long: Troponin I (292 aa).

Serine 1 is subject to N-acetylserine. Positions 1–149 (SSLEERRAAR…GLGGLSPEKK (149 aa)) are disordered. Residues 46 to 55 (YSAPAEPAYD) show a composition bias toward low complexity. Positions 58–134 (AENRRRQQQE…EARRMAEEQK (77 aa)) are enriched in basic and acidic residues. The segment at 237 to 250 (DTKGKFVKPVLRKV) is actin-binding. The disordered stretch occupies residues 255–292 (SKLDKIQRKEAKKSDFRDNLKSSREHEADKEGGEGENE).

The protein belongs to the troponin I family.

In terms of biological role, troponin I is the inhibitory subunit of troponin, the thin filament regulatory complex which confers calcium-sensitivity to striated muscle actomyosin ATPase activity. In Chlamys nipponensis akazara (Akazara scallop), this protein is Troponin I.